A 53-amino-acid chain; its full sequence is Rho GTPase-activating protein 6 (53 aa).

It localises to the cytoplasm. GTPase activator for the Rho-type GTPases by converting them to an inactive GDP-bound state. Could regulate the interactions of signaling molecules with the actin cytoskeleton. Promotes continuous elongation of cytoplasmic processes during cell motility and simultaneous retraction of the cell body changing the cell morphology. The chain is Rho GTPase-activating protein 6 (arhgap6) from Takifugu rubripes (Japanese pufferfish).